We begin with the raw amino-acid sequence, 182 residues long: MEERCFRLGIKTNYKKEIFMILNNKQNKTEFIVSKMDELVNWARKGSLWPMTFGLACCAVEMMHSAASRYDLDRFGIIFRPSPRQSDVMIVAGTLTNKMAPALRKVYDQMSEPRWVVSMGSCANGGGYYHYSYSVVRGCDRIVPVDIYVPGCPPTAEALLYGLLQLQKKIKRSRKTLYWLQK.

Residues cysteine 57, cysteine 58, cysteine 122, and cysteine 152 each coordinate [4Fe-4S] cluster.

This sequence belongs to the complex I 20 kDa subunit family. Requires [4Fe-4S] cluster as cofactor.

The protein localises to the mitochondrion. It carries out the reaction a ubiquinone + NADH + 5 H(+)(in) = a ubiquinol + NAD(+) + 4 H(+)(out). The chain is NADH-ubiquinone oxidoreductase 20 kDa subunit (NAD10) from Reclinomonas americana.